The chain runs to 680 residues: DNA ligase (680 aa).

Residues D35–D39, S86–L87, and E111 contribute to the NAD(+) site. K113 (N6-AMP-lysine intermediate) is an active-site residue. Positions 134, 174, 290, and 314 each coordinate NAD(+). 4 residues coordinate Zn(2+): C408, C411, C427, and C433. A BRCT domain is found at V597–E680.

The protein belongs to the NAD-dependent DNA ligase family. LigA subfamily. Mg(2+) is required as a cofactor. Requires Mn(2+) as cofactor.

It catalyses the reaction NAD(+) + (deoxyribonucleotide)n-3'-hydroxyl + 5'-phospho-(deoxyribonucleotide)m = (deoxyribonucleotide)n+m + AMP + beta-nicotinamide D-nucleotide.. In terms of biological role, DNA ligase that catalyzes the formation of phosphodiester linkages between 5'-phosphoryl and 3'-hydroxyl groups in double-stranded DNA using NAD as a coenzyme and as the energy source for the reaction. It is essential for DNA replication and repair of damaged DNA. In Corynebacterium glutamicum (strain ATCC 13032 / DSM 20300 / JCM 1318 / BCRC 11384 / CCUG 27702 / LMG 3730 / NBRC 12168 / NCIMB 10025 / NRRL B-2784 / 534), this protein is DNA ligase.